Reading from the N-terminus, the 528-residue chain is MPISLGNAFIKNFLGKAPDWYKVAIIAFLIINPIVFFLINPFVAGWLLVAEFIFTLAMALKCYPLQPGGLLAIEAIAIGMTSPAQVKHELVANIEVLLLLVFMVAGIYFMKHLLLFIFTKILLGIRSKTLLSLAFCFAAAFLSAFLDALTVIAVVISVAIGFYSIYHKVASGNPIGDHDHTQDDTITELTRDDLENYRAFLRSLLMHAGVGTALGGVTTMVGEPQNLIIADQAGWLFGEFLIRMSPVTLPVFFCGLITCALVEKLKVFGYGAKLPNNVRQILVDFDNEERKTRTNQDVAKLWVQGLIAVWLIVALALHLAAVGLIGLSVIILATAFTGVIEEHSMGKAFEEALPFTALLAVFFSIVAVIIDQELFKPVIDAVLAVEDKGTQLALFYVANGLLSMVSDNVFVGTVYINEVKTALIEGLITREQFDLLAVAINTGTNLPSVATPNGQAAFLFLLTSALAPLIRLSYGRMVIMALPYTIVLAIVGLMGIMFFLEPATASFYDAGWILPHSGDLTPVVSGGH.

Residues 1–23 are Cytoplasmic-facing; the sequence is MPISLGNAFIKNFLGKAPDWYKV. A helical transmembrane segment spans residues 24 to 46; the sequence is AIIAFLIINPIVFFLINPFVAGW. The Periplasmic segment spans residues 47 to 95; the sequence is LLVAEFIFTLAMALKCYPLQPGGLLAIEAIAIGMTSPAQVKHELVANIE. Residues 96–118 form a helical membrane-spanning segment; it reads VLLLLVFMVAGIYFMKHLLLFIF. At 119–129 the chain is on the cytoplasmic side; the sequence is TKILLGIRSKT. The chain crosses the membrane as a helical span at residues 130–163; sequence LLSLAFCFAAAFLSAFLDALTVIAVVISVAIGFY. Residues 164–239 lie on the Periplasmic side of the membrane; sequence SIYHKVASGN…ADQAGWLFGE (76 aa). The chain crosses the membrane as a helical span at residues 240-262; it reads FLIRMSPVTLPVFFCGLITCALV. The Cytoplasmic portion of the chain corresponds to 263 to 297; that stretch reads EKLKVFGYGAKLPNNVRQILVDFDNEERKTRTNQD. The helical transmembrane segment at 298 to 317 threads the bilayer; sequence VAKLWVQGLIAVWLIVALAL. The Periplasmic portion of the chain corresponds to 318–320; the sequence is HLA. A helical transmembrane segment spans residues 321–340; it reads AVGLIGLSVIILATAFTGVI. The Cytoplasmic segment spans residues 341 to 352; sequence EEHSMGKAFEEA. A helical membrane pass occupies residues 353–375; it reads LPFTALLAVFFSIVAVIIDQELF. The Periplasmic portion of the chain corresponds to 376-389; it reads KPVIDAVLAVEDKG. The chain crosses the membrane as a helical span at residues 390-412; the sequence is TQLALFYVANGLLSMVSDNVFVG. The Cytoplasmic segment spans residues 413–477; sequence TVYINEVKTA…PLIRLSYGRM (65 aa). Residues 478–500 traverse the membrane as a helical segment; the sequence is VIMALPYTIVLAIVGLMGIMFFL. Residues 501 to 528 are Periplasmic-facing; that stretch reads EPATASFYDAGWILPHSGDLTPVVSGGH.

The protein belongs to the NhaB Na(+)/H(+) (TC 2.A.34) antiporter family.

The protein localises to the cell inner membrane. The catalysed reaction is 2 Na(+)(in) + 3 H(+)(out) = 2 Na(+)(out) + 3 H(+)(in). Its function is as follows. Na(+)/H(+) antiporter that extrudes sodium in exchange for external protons. In Vibrio alginolyticus, this protein is Na(+)/H(+) antiporter NhaB.